We begin with the raw amino-acid sequence, 684 residues long: MNPPAAFLAGRQNIGSEVEISTIEKQRKELQLLIGELKDRDKELNDMVAVHQQQLLSWEEDRQKVLTLEERCSKLEGELHKRTEIIRSLTKKVKALESNQMECQTALQKTQLQLQEMAQKATHSSLLSEDLEARNETLSNTLVELSAQVGQLQAREQALTTMIKLKDKDIIEAVNHIADCSGKFKMLEHALRDAKMAETCIVKEKQDYKQKLKALKIEVNKLKEDLNEKTTENNEQREEIIRLKQEKSCLHDELLFTVEREKRKDELLNIAKSKQERTNSELHNLRQIYVKQQSDLQFLNFNVENSQELIQMYDSKMEESKALDSSRDMCLSDLENNHPKVDIKREKNQKSLFKDQKFEAMLVQQNRSDKSSCDECKEKKQQIDTVFGEKSVITLSSIFTKDLVEKHNLPWSLGGKTQIEPENKITLCKIHTKSPKCHGTGVQNEGKQPSETPTLSDEKQWHDVSVYLGLTNCPSSKHPEKLDVECQDQMERSEISCCQKNEACLGESGMCDSKCCHPSNFIIEAPGHMSDVEWMSIFKPSKMQRIVRLKSGCTCSESICGTQHDSPASELIAIQDSHSLGSSKSALREDETESSSNKKNSPTSLLIYKDAPAFNEKASIVLPSQDDFSPTSKLQRLLAESRQMVTDLELSTLLPISHENLTGSATNKSEVPEESAQKNTFVSY.

2 coiled-coil regions span residues 11–160 (RQNI…QALT) and 199–322 (TCIV…ESKA). Positions 579–603 (SLGSSKSALREDETESSSNKKNSPT) are disordered. Polar residues predominate over residues 594–603 (SSSNKKNSPT). Short sequence motifs (LXXLL motif) lie at residues 634-638 (LQRLL) and 650-654 (LSTLL). The tract at residues 657-684 (SHENLTGSATNKSEVPEESAQKNTFVSY) is disordered. The span at 659–669 (ENLTGSATNKS) shows a compositional bias: polar residues.

Interacts with ESR1 and ESR2 in the presence of estradiol/E2. The interaction with ESR2 recruits CCDC62 to ER target genes, including cyclin-D1/CCND1 AP-1 promoter. Interacts with GOPC. As to expression, highly expressed in adult testis. Expressed in both prostate epithelial and stromal cells, with predominant expression in epithelial cells (at protein level). Not detected in prostate by RT-PCR. Overexpressed in various cancers.

The protein resides in the cytoplasm. Its subcellular location is the nucleus. It localises to the cytoplasmic vesicle. The protein localises to the secretory vesicle. It is found in the acrosome. In terms of biological role, nuclear receptor coactivator that can enhance preferentially estrogen receptors ESR1 and ESR2 transactivation. Also modulates progesterone/PGR, glucocorticoid/NR3C1 and androgen/AR receptors transactivation, although at lower level; little effect on vitamin D receptor/VDR. Required for normal spermiogenesis. It probably plays a role in acrosome formation. This is Coiled-coil domain-containing protein 62 (CCDC62) from Homo sapiens (Human).